The following is a 165-amino-acid chain: 6,7-dimethyl-8-ribityllumazine synthase (165 aa).

5-amino-6-(D-ribitylamino)uracil-binding positions include Phe22, 56-58 (SME), and 80-82 (AVI). Position 85–86 (85–86 (ET)) interacts with (2S)-2-hydroxy-3-oxobutyl phosphate. The Proton donor role is filled by His88. Phe113 contacts 5-amino-6-(D-ribitylamino)uracil. A (2S)-2-hydroxy-3-oxobutyl phosphate-binding site is contributed by Arg127.

This sequence belongs to the DMRL synthase family.

It carries out the reaction (2S)-2-hydroxy-3-oxobutyl phosphate + 5-amino-6-(D-ribitylamino)uracil = 6,7-dimethyl-8-(1-D-ribityl)lumazine + phosphate + 2 H2O + H(+). The protein operates within cofactor biosynthesis; riboflavin biosynthesis; riboflavin from 2-hydroxy-3-oxobutyl phosphate and 5-amino-6-(D-ribitylamino)uracil: step 1/2. Catalyzes the formation of 6,7-dimethyl-8-ribityllumazine by condensation of 5-amino-6-(D-ribitylamino)uracil with 3,4-dihydroxy-2-butanone 4-phosphate. This is the penultimate step in the biosynthesis of riboflavin. The sequence is that of 6,7-dimethyl-8-ribityllumazine synthase from Thermotoga petrophila (strain ATCC BAA-488 / DSM 13995 / JCM 10881 / RKU-1).